The sequence spans 304 residues: Nod factor export ATP-binding protein I (304 aa).

One can recognise an ABC transporter domain in the interval 6-236 (IDLAGVKKSF…HIGCQVIEIF (231 aa)). 38 to 45 (GPNGAGKS) is an ATP binding site.

This sequence belongs to the ABC transporter superfamily. Lipooligosaccharide exporter (TC 3.A.1.102) family. As to quaternary structure, the complex is composed of two ATP-binding proteins (NodI) and two transmembrane proteins (NodJ).

Its subcellular location is the cell inner membrane. In terms of biological role, part of the ABC transporter complex NodIJ involved in the export of the nodulation factors (Nod factors), the bacterial signal molecules that induce symbiosis and subsequent nodulation induction. Nod factors are LCO (lipo-chitin oligosaccharide), a modified beta-1,4-linked N-acetylglucosamine oligosaccharide. This subunit is responsible for energy coupling to the transport system. In Rhizobium sp. (strain N33), this protein is Nod factor export ATP-binding protein I.